We begin with the raw amino-acid sequence, 411 residues long: Elongation factor Tu, apicoplast (411 aa).

The tr-type G domain maps to 10-214 (KPHVNIGTIG…TVDSYIEKPE (205 aa)). A G1 region spans residues 19–26 (GHVDHGKT). 19-26 (GHVDHGKT) contacts GTP. Thr26 is a Mg(2+) binding site. A G2 region spans residues 61-65 (GITIN). The G3 stretch occupies residues 82–85 (DCPG). GTP contacts are provided by residues 82–86 (DCPGH) and 137–140 (NKED). The tract at residues 137–140 (NKED) is G4. Residues 175 to 177 (SAL) form a G5 region.

It belongs to the TRAFAC class translation factor GTPase superfamily. Classic translation factor GTPase family. EF-Tu/EF-1A subfamily.

It localises to the plastid. The protein resides in the apicoplast. The catalysed reaction is GTP + H2O = GDP + phosphate + H(+). In terms of biological role, GTP hydrolase that promotes the GTP-dependent binding of aminoacyl-tRNA to the A-site of ribosomes during protein biosynthesis. In Theileria parva (East coast fever infection agent), this protein is Elongation factor Tu, apicoplast (tufA).